The following is a 314-amino-acid chain: Endolytic peptidoglycan transglycosylase RlpA (314 aa).

Residues 1–19 (MGWALKKVCFLGVIFLISA) form the signal peptide. Residue Cys20 is the site of N-palmitoyl cysteine attachment. Cys20 carries S-diacylglycerol cysteine lipidation. Residues 241–314 (SVSGGKFSLQ…YNQNAVLTRE (74 aa)) enclose the SPOR domain.

The protein belongs to the RlpA family.

It localises to the cell membrane. Lytic transglycosylase with a strong preference for naked glycan strands that lack stem peptides. The chain is Endolytic peptidoglycan transglycosylase RlpA from Helicobacter pylori (strain J99 / ATCC 700824) (Campylobacter pylori J99).